A 90-amino-acid chain; its full sequence is Cell division topological specificity factor (90 aa).

Residues 1–21 form a disordered region; the sequence is MAGFWSKLFSSEEKPSSAQTA. Positions 10-21 are enriched in basic and acidic residues; sequence SSEEKPSSAQTA.

Belongs to the MinE family.

In terms of biological role, prevents the cell division inhibition by proteins MinC and MinD at internal division sites while permitting inhibition at polar sites. This ensures cell division at the proper site by restricting the formation of a division septum at the midpoint of the long axis of the cell. This Acinetobacter baumannii (strain AB307-0294) protein is Cell division topological specificity factor.